The sequence spans 365 residues: G-protein coupled receptor 68 (365 aa).

Over 1–12 (MGNITTENSSLS) the chain is Extracellular. 2 N-linked (GlcNAc...) asparagine glycosylation sites follow: Asn-3 and Asn-8. The helical transmembrane segment at 13 to 49 (CPIDHTIHQTLAPVVYVTVLVVGFPANCLSLYFGYLQ) threads the bilayer. 2 disulfides stabilise this stretch: Cys-13–Cys-258 and Cys-94–Cys-172. Over 50 to 53 (IKAR) the chain is Cytoplasmic. The chain crosses the membrane as a helical span at residues 54-84 (NELGVYLCNLTIADLFYICSLPFWLQYVLQH). The Extracellular portion of the chain corresponds to 85 to 89 (DDWSH). A helical transmembrane segment spans residues 90–125 (GDLSCQVCGILLYENIYISVGFLCCISIDRYLAVAH). Residues 126 to 133 (PFRFHQFR) are Cytoplasmic-facing. The helical transmembrane segment at 134–160 (TLKAAVGVSVLIWAKELLTSIYFLNHK) threads the bilayer. At 161 to 176 (EVIEDEDQHRVCFEHY) the chain is on the extracellular side. Residues 161 to 176 (EVIEDEDQHRVCFEHY) are extracellular loop 2 (ECL2). The chain crosses the membrane as a helical span at residues 177-214 (PIQAWQRSINYYRFLVGFLFPICLLLASYQGILRAVRR). At 215 to 218 (SHGT) the chain is on the cytoplasmic side. Residues 219–254 (QKSRKDQIQRLVLSTVVIFLACFLPYHVLLLVRSLW) traverse the membrane as a helical segment. The Extracellular segment spans residues 255-260 (ERNCEF). The chain crosses the membrane as a helical span at residues 261–289 (AKSIFNVYHFSLLLTSFNCVADPVLYCFV). The Cytoplasmic portion of the chain corresponds to 290–365 (SETTHRDLAR…VGGPSTVGLA (76 aa)).

It belongs to the G-protein coupled receptor 1 family. Expressed in the lung, testis, heart, brain, spleen, thymus, brown fat, small intestine, colon, peripheral blood leukocytes, macrophages, stomach, ovary and white fat but not in the liver, kidney, and skeletal muscle. Expression in the prostate is weak but detectable. Specifically expressed in endothelial cells of small-diameter resistance arteries.

Its subcellular location is the cell membrane. Activated by a network of residues that connects an extracellular-facing cavity to Glu-149, a conserved charged residue buried in the transmembrane core of the receptor. Protonation likely drives conformational changes in extracellular loop 2 (ECL2), which stabilizes movement of transmembrane 3 (TM3) and a series of rearrangements that connect the extracellular-facing cavity to Glu-149, a residue only conserved in proton-sensing G-protein coupled receptors. Activated in an allosteric manner by divalent metal ions at the extracellular surface following the order: Cd(2+) &gt; Co(2+) &gt; Ni(2+) &gt; Zn(2+) &gt; Fe(2+) &gt; Ca(2+) &gt; Mg(2+). Activated by ogerin (ZINC67740571), a selective GPR68 positive allosteric modulator. Inhibited by small molecule GPR68-I, decreasing inflammation in models of colitis. Its function is as follows. Proton-sensing G-protein coupled receptor activated by extracellular pH, which is required to monitor pH changes and generate adaptive reactions. The receptor is almost silent at pH 7.8 but fully activated at pH 6.8. Ligand binding causes a conformation change that triggers signaling via guanine nucleotide-binding proteins (G proteins) and modulates the activity of downstream effectors, such as phospholipase C. GPR68 is mainly coupled to G(q) G proteins and mediates production of diacylglycerol (DAG) and inositol 1,4,5-trisphosphate (IP3). Acts as a key mechanosensor of fluid shear stress and membrane stretch. Expressed in endothelial cells of small-diameter resistance arteries, where it mediates flow-induced dilation in response to shear stress. May represents an osteoblastic pH sensor regulating cell-mediated responses to acidosis in bone. Acts as a regulator of calcium-sensing receptor CASR in a seesaw manner: GPR68-mediated signaling inhibits CASR signaling in response to protons, while CASR inhibits GPR68 in presence of extracellular calcium. Also functions as a metastasis suppressor gene in prostate cancer. The polypeptide is G-protein coupled receptor 68 (Mus musculus (Mouse)).